The chain runs to 222 residues: Peptidyl-prolyl cis-trans isomerase FKBP7 (222 aa).

The first 23 residues, M1 to A23, serve as a signal peptide directing secretion. N45 carries an N-linked (GlcNAc...) asparagine glycan. The PPIase FKBP-type domain occupies G53 to T145. EF-hand domains follow at residues T145–K180 and Y189–L222. D158, D160, D162, Q164, E169, D202, D204, D206, and E213 together coordinate Ca(2+). The tract at residues K200–L222 is disordered. The Retention in the endoplasmic reticulum motif lies at H219 to L222.

Glycosylated.

It localises to the endoplasmic reticulum lumen. It carries out the reaction [protein]-peptidylproline (omega=180) = [protein]-peptidylproline (omega=0). Its function is as follows. PPIases accelerate the folding of proteins during protein synthesis. The polypeptide is Peptidyl-prolyl cis-trans isomerase FKBP7 (FKBP7) (Homo sapiens (Human)).